The following is a 281-amino-acid chain: CDAN1-interacting nuclease 1 (281 aa).

At Thr-114 the chain carries Phosphothreonine.

The protein resides in the nucleus. Its subcellular location is the cytoplasm. Its function is as follows. Plays a role in erythroid cell differentiation. The sequence is that of CDAN1-interacting nuclease 1 from Homo sapiens (Human).